The chain runs to 593 residues: Proline--tRNA ligase (593 aa).

This sequence belongs to the class-II aminoacyl-tRNA synthetase family. ProS type 1 subfamily. As to quaternary structure, homodimer.

The protein resides in the cytoplasm. The enzyme catalyses tRNA(Pro) + L-proline + ATP = L-prolyl-tRNA(Pro) + AMP + diphosphate. Functionally, catalyzes the attachment of proline to tRNA(Pro) in a two-step reaction: proline is first activated by ATP to form Pro-AMP and then transferred to the acceptor end of tRNA(Pro). As ProRS can inadvertently accommodate and process non-cognate amino acids such as alanine and cysteine, to avoid such errors it has two additional distinct editing activities against alanine. One activity is designated as 'pretransfer' editing and involves the tRNA(Pro)-independent hydrolysis of activated Ala-AMP. The other activity is designated 'posttransfer' editing and involves deacylation of mischarged Ala-tRNA(Pro). The misacylated Cys-tRNA(Pro) is not edited by ProRS. The sequence is that of Proline--tRNA ligase from Synechococcus sp. (strain CC9902).